Reading from the N-terminus, the 198-residue chain is FMN-dependent NADH:quinone oxidoreductase (198 aa).

Residues S10, 16-18, 94-97, and 138-141 contribute to the FMN site; these read SQS, MYNF, and TRGG.

It belongs to the azoreductase type 1 family. In terms of assembly, homodimer. The cofactor is FMN.

It carries out the reaction 2 a quinone + NADH + H(+) = 2 a 1,4-benzosemiquinone + NAD(+). The catalysed reaction is N,N-dimethyl-1,4-phenylenediamine + anthranilate + 2 NAD(+) = 2-(4-dimethylaminophenyl)diazenylbenzoate + 2 NADH + 2 H(+). Its function is as follows. Quinone reductase that provides resistance to thiol-specific stress caused by electrophilic quinones. Functionally, also exhibits azoreductase activity. Catalyzes the reductive cleavage of the azo bond in aromatic azo compounds to the corresponding amines. In Shewanella baltica (strain OS195), this protein is FMN-dependent NADH:quinone oxidoreductase.